We begin with the raw amino-acid sequence, 201 residues long: MKLVLATNNKGKVKELAELLKPCGYQVVSIGEFPGFTEVEEDGNTFADNAIKKALAAAEFTGELALADDSGLEVDALKGAPGVYSARFAGEPKDDTANNAKLLSLLEGVPQDHRTARFRCVIAIAEPNGRIHTAEGSCEGVILRELKGEGGFGYDPLFYVPEYKQTFAELDMEKKNSISHRGKALKKAMEILNRLYIHQEV.

7–12 (TNNKGK) serves as a coordination point for substrate. The Mg(2+) site is built by glutamate 40 and aspartate 69. Catalysis depends on aspartate 69, which acts as the Proton acceptor. Residues serine 70, 152–155 (FGYD), lysine 175, and 180–181 (HR) each bind substrate.

The protein belongs to the HAM1 NTPase family. As to quaternary structure, homodimer. Requires Mg(2+) as cofactor.

The catalysed reaction is XTP + H2O = XMP + diphosphate + H(+). It catalyses the reaction dITP + H2O = dIMP + diphosphate + H(+). The enzyme catalyses ITP + H2O = IMP + diphosphate + H(+). In terms of biological role, pyrophosphatase that catalyzes the hydrolysis of nucleoside triphosphates to their monophosphate derivatives, with a high preference for the non-canonical purine nucleotides XTP (xanthosine triphosphate), dITP (deoxyinosine triphosphate) and ITP. Seems to function as a house-cleaning enzyme that removes non-canonical purine nucleotides from the nucleotide pool, thus preventing their incorporation into DNA/RNA and avoiding chromosomal lesions. The protein is dITP/XTP pyrophosphatase of Desulforamulus reducens (strain ATCC BAA-1160 / DSM 100696 / MI-1) (Desulfotomaculum reducens).